The chain runs to 393 residues: Zinc finger CCHC domain-containing protein 18 (393 aa).

2 disordered regions span residues 281-300 (VEPE…RGTA) and 313-341 (DDFD…RTRK). Composition is skewed to polar residues over residues 291–300 (PGASSLRGTA) and 320–331 (PSTSSGSGQRNN). A CCHC-type zinc finger spans residues 346–363 (IRCPHCGEEGHAKETCDN).

It belongs to the ZCCHC12 family.

The chain is Zinc finger CCHC domain-containing protein 18 from Mus musculus (Mouse).